The primary structure comprises 93 residues: Acylphosphatase (93 aa).

Residues 6–93 form the Acylphosphatase-like domain; that stretch reads RAHILVSGEV…GDLGPFSVRH (88 aa). Active-site residues include Arg21 and Asn39.

It belongs to the acylphosphatase family.

It carries out the reaction an acyl phosphate + H2O = a carboxylate + phosphate + H(+). This Anaeromyxobacter sp. (strain Fw109-5) protein is Acylphosphatase (acyP).